A 336-amino-acid chain; its full sequence is tRNA N6-adenosine threonylcarbamoyltransferase (336 aa).

Positions 112 and 116 each coordinate Fe cation. Substrate is bound by residues 136 to 140 (LVSGG), aspartate 169, glycine 182, and asparagine 276. Aspartate 304 serves as a coordination point for Fe cation.

This sequence belongs to the KAE1 / TsaD family. It depends on Fe(2+) as a cofactor.

It localises to the cytoplasm. The enzyme catalyses L-threonylcarbamoyladenylate + adenosine(37) in tRNA = N(6)-L-threonylcarbamoyladenosine(37) in tRNA + AMP + H(+). Required for the formation of a threonylcarbamoyl group on adenosine at position 37 (t(6)A37) in tRNAs that read codons beginning with adenine. Is involved in the transfer of the threonylcarbamoyl moiety of threonylcarbamoyl-AMP (TC-AMP) to the N6 group of A37, together with TsaE and TsaB. TsaD likely plays a direct catalytic role in this reaction. The polypeptide is tRNA N6-adenosine threonylcarbamoyltransferase (Francisella philomiragia subsp. philomiragia (strain ATCC 25017 / CCUG 19701 / FSC 153 / O#319-036)).